The chain runs to 57 residues: Small ribosomal subunit protein bS21 (57 aa).

The tract at residues 35-57 (REHYEKPSVKRKKKAEAARKKKF) is disordered. Over residues 43–57 (VKRKKKAEAARKKKF) the composition is skewed to basic residues.

It belongs to the bacterial ribosomal protein bS21 family.

This chain is Small ribosomal subunit protein bS21, found in Alkaliphilus metalliredigens (strain QYMF).